The chain runs to 519 residues: Sterile alpha motif domain-containing protein 1 (519 aa).

A compositionally biased stretch (pro residues) spans 1 to 11 (MAGPPALPPPE). 2 disordered regions span residues 1–30 (MAGP…ASPH) and 87–232 (YKGS…PVSL). Residues 12–29 (TAAAATTAAAASSSAASP) show a composition bias toward low complexity. The region spanning 23-99 (SSSAASPHYQ…SISYRNAARV (77 aa)) is the SAMD1-like winged helix (WH) domain. T107 carries the post-translational modification Phosphothreonine. Positions 108 to 133 (PPAPPRVPRGGPAAPPPTPAPPPAPV) are enriched in pro residues. The segment covering 134-147 (AAPTRAPRAAAATA) has biased composition (low complexity). S150 is subject to Phosphoserine. Residues 157–166 (GPRAQRAAPL) are compositionally biased toward low complexity. Pro residues predominate over residues 167-217 (AAPPPAPAAPPAAAPPAGPRRAPPPAVAAREPPAPPQQQQPPPPQPQPPPE). Low complexity predominate over residues 218 to 230 (GGAARAGGPARPV). S242 carries the phosphoserine modification. Residues 261–271 (EAARGRLERTR) are compositionally biased toward basic and acidic residues. Disordered regions lie at residues 261–381 (EAAR…PGSC) and 417–439 (PALP…KPTD). Positions 308 to 325 (KEEEDEDEDEEEEEEDNV) are enriched in acidic residues. The region spanning 443–511 (WTVMDVVEYF…KVLQQGHFED (69 aa)) is the SAM domain.

As to quaternary structure, homopolymerize into a closed pentameric ring. Interacts (via SAM domain) with L3MBTL3 (via SAM domain); the interaction mediates L3MBTL3 binding to chromatin. Interacts (via WH domain) with KDM1A; the interaction modulates KDM1A function. In terms of tissue distribution, expressed to similar levels in different organs. Expressed at higher levels in bone marrow, osteoclasts and spleen. Expressed in vascular smooth muscle cells.

The protein localises to the nucleus. The protein resides in the chromosome. It is found in the secreted. Functionally, unmethylated CpG islands (CGIs)-binding protein which localizes to H3K4me3-decorated CGIs, where it acts as a transcriptional repressor. Tethers L3MBTL3 to chromatin and interacts with the KDM1A histone demethylase complex to modulate H3K4me2 and H3K4me3 levels at CGIs. Plays a role in atherogenesis by binding with LDL on cell surface and promoting LDL oxidation which leads to the formation of foam cell. The polypeptide is Sterile alpha motif domain-containing protein 1 (Mus musculus (Mouse)).